We begin with the raw amino-acid sequence, 485 residues long: Programmed cell death protein 7 (485 aa).

The disordered stretch occupies residues Met1 to Leu133. Over residues Pro12–Phe48 the composition is skewed to pro residues. Residues Pro49 to Ser71 show a composition bias toward low complexity. Composition is skewed to pro residues over residues Pro82 to Arg96 and Pro109 to Ala130. Coiled-coil stretches lie at residues Val232–Arg335 and Arg362–Leu411.

As to quaternary structure, interacts with RBM40. Component of the U11/U12 snRNPs that are part of the U12-type spliceosome.

It localises to the nucleus. Promotes apoptosis when overexpressed. This chain is Programmed cell death protein 7 (PDCD7), found in Homo sapiens (Human).